The chain runs to 437 residues: Enolase 2 (437 aa).

Substrate contacts are provided by H160 and E169. E212 functions as the Proton donor in the catalytic mechanism. Residues D247, E296, and D321 each coordinate Mg(2+). The substrate site is built by E296 and D321. K346 functions as the Proton acceptor in the catalytic mechanism. Residues 373–376 and K397 each bind substrate; that span reads SHRS.

It belongs to the enolase family. Homodimer. Mg(2+) is required as a cofactor.

The protein resides in the cytoplasm. The catalysed reaction is (2R)-2-phosphoglycerate = phosphoenolpyruvate + H2O. It participates in carbohydrate degradation; glycolysis; pyruvate from D-glyceraldehyde 3-phosphate: step 4/5. The protein is Enolase 2 (ENO2) of Candida glabrata (strain ATCC 2001 / BCRC 20586 / JCM 3761 / NBRC 0622 / NRRL Y-65 / CBS 138) (Yeast).